The chain runs to 150 residues: Phosphopantetheine adenylyltransferase (150 aa).

T15 contacts substrate. ATP-binding positions include 15–16 and H23; that span reads TF. Positions 80 and 94 each coordinate substrate. ATP is bound by residues 95–97, E105, and 130–136; these read GIR and LENISSR.

Belongs to the bacterial CoaD family. As to quaternary structure, homohexamer. Requires Mg(2+) as cofactor.

Its subcellular location is the cytoplasm. It carries out the reaction (R)-4'-phosphopantetheine + ATP + H(+) = 3'-dephospho-CoA + diphosphate. The protein operates within cofactor biosynthesis; coenzyme A biosynthesis; CoA from (R)-pantothenate: step 4/5. Its function is as follows. Reversibly transfers an adenylyl group from ATP to 4'-phosphopantetheine, yielding dephospho-CoA (dPCoA) and pyrophosphate. This is Phosphopantetheine adenylyltransferase from Malacoplasma penetrans (strain HF-2) (Mycoplasma penetrans).